The following is a 513-amino-acid chain: Cobyric acid synthase (513 aa).

In terms of domain architecture, GATase cobBQ-type spans 252–457 (KIDIAVIRLP…LHGIFDEEGI (206 aa)). Residue C333 is the Nucleophile of the active site. The active site involves H449.

Belongs to the CobB/CobQ family. CobQ subfamily.

It functions in the pathway cofactor biosynthesis; adenosylcobalamin biosynthesis. Functionally, catalyzes amidations at positions B, D, E, and G on adenosylcobyrinic A,C-diamide. NH(2) groups are provided by glutamine, and one molecule of ATP is hydrogenolyzed for each amidation. In Lachnoclostridium phytofermentans (strain ATCC 700394 / DSM 18823 / ISDg) (Clostridium phytofermentans), this protein is Cobyric acid synthase.